Consider the following 367-residue polypeptide: Zinc metalloproteinase nas-22 (367 aa).

An N-terminal signal peptide occupies residues 1–16 (MKSFFILLSILQECYG). The Peptidase M12A domain occupies 41–237 (VLIRGSDEER…LMINKYYECS (197 aa)). Asparagine 56 and asparagine 85 each carry an N-linked (GlcNAc...) asparagine glycan. Cystine bridges form between cysteine 88-cysteine 236, cysteine 111-cysteine 130, cysteine 238-cysteine 258, and cysteine 260-cysteine 269. Zn(2+) is bound at residue histidine 138. Glutamate 139 is an active-site residue. Residues histidine 142 and histidine 148 each coordinate Zn(2+). 3 N-linked (GlcNAc...) asparagine glycosylation sites follow: asparagine 169, asparagine 241, and asparagine 254. The 39-residue stretch at 232 to 270 (KYYECSCANNLSCKNHGYPNPSNCSQCNCPYGFGGADCS) folds into the EGF-like domain. N-linked (GlcNAc...) asparagine glycans are attached at residues asparagine 287 and asparagine 322.

Requires Zn(2+) as cofactor. As to expression, expressed in uterine seam (utse) cell.

The protein resides in the secreted. Its function is as follows. Metalloprotease. The protein is Zinc metalloproteinase nas-22 (nas-22) of Caenorhabditis elegans.